Reading from the N-terminus, the 507-residue chain is MITLTPGHLTLPQLRKIARESVQLTLDPASFAKIDAGAKAVADIAAKGEPAYGINTGFGRLASTHIPHDQLELLQKNLVLSHAVGVGEPMARSSVRLLMALKLSSLGRGHSGIRREVMDALITLFNADVLPLIPVKGSVGASGDLAPLAHMSAVLLGVGEVFIRGERASALDGLRVAGLAPLTLQAKEGLALLNGTQASTALALDNMFSIEDLYRTALVAGALSVDAAAGSVKPFDARIHELRGHRGQIDAAAAYRDLLDGSPINQSHRDCDKVQDPYSLRCQPQVMGACLDQMRHAADVLLIEANAVSDNPLIFPDTGEVLSGGNFHAEPVAFAADNLALAAAEIGALAERRIALLIDATLSGLPPFLVKDGGVNSGFMIAHVTAAALASENKTLAHPASVDSLPTSANQEDHVSMATFAARKLADIADNTKYILAIELLAAAQGVDLRAPYHTSPKLAPVMETIRGHVAHYELDHYFAPDIAVIAKLVSERAFAKVAPFSFASEQ.

Positions 141–143 (ASG) form a cross-link, 5-imidazolinone (Ala-Gly). At S142 the chain carries 2,3-didehydroalanine (Ser).

It belongs to the PAL/histidase family. Post-translationally, contains an active site 4-methylidene-imidazol-5-one (MIO), which is formed autocatalytically by cyclization and dehydration of residues Ala-Ser-Gly.

The protein resides in the cytoplasm. It catalyses the reaction L-histidine = trans-urocanate + NH4(+). Its pathway is amino-acid degradation; L-histidine degradation into L-glutamate; N-formimidoyl-L-glutamate from L-histidine: step 1/3. This Burkholderia ambifaria (strain ATCC BAA-244 / DSM 16087 / CCUG 44356 / LMG 19182 / AMMD) (Burkholderia cepacia (strain AMMD)) protein is Histidine ammonia-lyase.